Consider the following 735-residue polypeptide: Rho GTPase-activating protein SYDE1 (735 aa).

Residues 1 to 253 form a disordered region; the sequence is MAEPLLRKTF…SPTSFRPYEV (253 aa). Residues 14 to 31 show a composition bias toward basic and acidic residues; that stretch reads RGREKLPRKKSDAKERGH. A compositionally biased stretch (pro residues) spans 35–46; that stretch reads RPEPSPPEPEPQ. Residues 47–71 are compositionally biased toward low complexity; sequence APEGSQAGAEGPSSPEASRSPARGA. A compositionally biased stretch (pro residues) spans 122 to 131; that stretch reads PPAPEPPGPQ. Residues 211 to 221 show a composition bias toward gly residues; it reads GGPGPAAGPGG. A phosphoserine mark is found at Ser224, Ser231, Ser235, and Ser244. The C2 domain maps to 249–366; it reads RPYEVGPAAR…FRGCQAQQLA (118 aa). The 207-residue stretch at 398 to 604 folds into the Rho-GAP domain; sequence LPLPLLVERE…YLLQSWPDPR (207 aa). Ser575 carries the phosphoserine modification. Disordered regions lie at residues 608–651 and 674–696; these read QSPD…SNRY and DYDH…PRVT. Phosphoserine is present on residues Ser681 and Ser683.

In terms of processing, palmitoylated. Probably palmitoylated by ZDHHC3 and ZDHHC7. As to expression, expressed in trophoblast cells of placental villi.

GTPase activator for the Rho-type GTPases. As a GCM1 downstream effector, it is involved in placental development and positively regulates trophoblast cells migration. It regulates cytoskeletal remodeling by controlling the activity of Rho GTPases including RHOA, CDC42 and RAC1. The chain is Rho GTPase-activating protein SYDE1 (SYDE1) from Homo sapiens (Human).